We begin with the raw amino-acid sequence, 400 residues long: MGRAKKVVLAYSGGVDTSVCIPYLKHEWGVDEVITLAADLGQGDELGPIQAKALKSGAVESLVEDATAEFVTDYAFKAIKANALYESRYPLSTALARPLIAKLLVEAAEKYGADAVAHGCTAKGNDQVRFDLGILALNPTLKVLAPAREWKMSREQTIAYGEKFGLDFPVKKSSPFSIDRNLLGRSIEAGPLEDPMTEPPEEIYLMTKAIADTPDTPEYVEIGFEKGLPVSLNGQTLDPVTLISQLNDVVGKHGVGRIDMIENRVVGIKSREIYEAPALLVLIDAHRDLESLTLTSDVTHYKKGVEETYSHLIYRGLWYSPLKESLDAFIDHTQERVNGTVRIKLFKGNANIVGRQSDYSIYSPNLATYGEDDHFDHKAAEGFIYIWGLPTRVWAEKTKG.

ATP is bound by residues 10–18 and alanine 38; that span reads AYSGGVDTS. Position 89 (tyrosine 89) interacts with L-citrulline. Glycine 119 contributes to the ATP binding site. Positions 121, 125, and 126 each coordinate L-aspartate. Asparagine 125 is an L-citrulline binding site. Residues arginine 129, serine 177, serine 186, glutamate 262, and tyrosine 274 each contribute to the L-citrulline site.

The protein belongs to the argininosuccinate synthase family. Type 1 subfamily. As to quaternary structure, homotetramer.

It is found in the cytoplasm. It carries out the reaction L-citrulline + L-aspartate + ATP = 2-(N(omega)-L-arginino)succinate + AMP + diphosphate + H(+). Its pathway is amino-acid biosynthesis; L-arginine biosynthesis; L-arginine from L-ornithine and carbamoyl phosphate: step 2/3. In Crocosphaera subtropica (strain ATCC 51142 / BH68) (Cyanothece sp. (strain ATCC 51142)), this protein is Argininosuccinate synthase.